Consider the following 299-residue polypeptide: Tyrosine recombinase XerD (299 aa).

The Core-binding (CB) domain maps to 3–88 (QQDNPLIEQF…AMRRLFQYLY (86 aa)). The Tyr recombinase domain occupies 109-293 (RLPKDLSEAQ…ATERLRQLHQ (185 aa)). Catalysis depends on residues Arg149, Lys173, His245, Arg248, and His271. Tyr280 functions as the O-(3'-phospho-DNA)-tyrosine intermediate in the catalytic mechanism.

This sequence belongs to the 'phage' integrase family. XerD subfamily. Forms a cyclic heterotetrameric complex composed of two molecules of XerC and two molecules of XerD, in which XerC interacts with XerD via its C-terminal region, XerD interacts with XerC via its C-terminal region and so on.

Its subcellular location is the cytoplasm. FtsK may regulate the catalytic switch between XerC and XerD in the heterotetrameric complex during the two steps of the recombination process. Functionally, site-specific tyrosine recombinase, which acts by catalyzing the cutting and rejoining of the recombining DNA molecules. Binds cooperatively to specific DNA consensus sequences that are separated from XerC binding sites by a short central region, forming the heterotetrameric XerC-XerD complex that recombines DNA substrates. The complex is essential to convert dimers of the bacterial chromosome into monomers to permit their segregation at cell division. It also contributes to the segregational stability of plasmids. In the complex XerD specifically exchanges the bottom DNA strands. The protein is Tyrosine recombinase XerD of Yersinia pestis.